The following is a 196-amino-acid chain: Molybdenum cofactor guanylyltransferase (196 aa).

GTP contacts are provided by residues 10–12 (LAG), Lys23, Asn51, Asp69, and Asp99. Mg(2+) is bound at residue Asp99.

The protein belongs to the MobA family. In terms of assembly, monomer. It depends on Mg(2+) as a cofactor.

It localises to the cytoplasm. It carries out the reaction Mo-molybdopterin + GTP + H(+) = Mo-molybdopterin guanine dinucleotide + diphosphate. Transfers a GMP moiety from GTP to Mo-molybdopterin (Mo-MPT) cofactor (Moco or molybdenum cofactor) to form Mo-molybdopterin guanine dinucleotide (Mo-MGD) cofactor. The polypeptide is Molybdenum cofactor guanylyltransferase (Shewanella sediminis (strain HAW-EB3)).